The following is a 573-amino-acid chain: Mucin-13 (573 aa).

Positions 1–17 (MKGFLLLSLSLLLVTVG) are cleaved as a signal peptide. A compositionally biased stretch (low complexity) spans 16 to 234 (VGSSSQASST…VPSGGSTGPS (219 aa)). Residues 16 to 237 (VGSSSQASST…GGSTGPSDLC (222 aa)) are disordered. At 18 to 480 (SSSQASSTTS…FGYSGMNCKD (463 aa)) the chain is on the extracellular side. The EGF-like 1 domain occupies 233–273 (PSDLCNPNPCKGTASCVKLHSKHFCLCLEGYYYNSSLSSCV). 3 cysteine pairs are disulfide-bonded: C237/C248, C242/C257, and C259/C272. N-linked (GlcNAc...) asparagine glycans are attached at residues N266, N316, and N397. The region spanning 274–391 (KGTTFPGDIS…DYVSINLCDH (118 aa)) is the SEA domain. 2 EGF-like domains span residues 385 to 425 (SINL…PFCV) and 425 to 467 (VAVT…RKCE). 6 disulfide bridges follow: C389–C402, C394–C408, C410–C424, C429–C441, C433–C451, and C453–C466. Residues 481-508 (QFQLILTIVGTIAGALILILLIAFIVSA) form a helical membrane-spanning segment. Over 509-573 (RSKNKKKDGE…NQRSMPRPDY (65 aa)) the chain is Cytoplasmic. Residues 548 to 573 (PKVRTGVPSQTPNPYANQRSMPRPDY) form a disordered region. A compositionally biased stretch (polar residues) spans 554–567 (VPSQTPNPYANQRS).

In terms of assembly, homodimer of beta subunits. In terms of processing, cleaved into two subunits, alpha and beta, probably between the first EGF domain and the SEA domain. Beta subunit contains the cytoplasmic tail and alpha subunit the extracellular tail. The homooligomerization into dimers is dependent on intrachain disulfide bonds. Highly N-glycosylated.

It localises to the cell membrane. It is found in the secreted. Its function is as follows. Epithelial and hemopoietic transmembrane mucin that may play a role in cell signaling. This is Mucin-13 (Muc13) from Mus musculus (Mouse).